The following is a 153-amino-acid chain: Iron-sulfur cluster assembly scaffold protein IscU 1 (153 aa).

Cys-33, Cys-58, His-101, and Cys-102 together coordinate [2Fe-2S] cluster.

It belongs to the NifU family. In terms of assembly, forms a heterotetramer with IscS2.

In terms of biological role, a scaffold on which IscS assembles Fe-S clusters. Subsequently gives the nascent cluster to other proteins. It is likely that Fe-S cluster coordination is flexible as the role of this complex is to build and then hand off Fe-S clusters. This chain is Iron-sulfur cluster assembly scaffold protein IscU 1 (iscU1), found in Archaeoglobus fulgidus (strain ATCC 49558 / DSM 4304 / JCM 9628 / NBRC 100126 / VC-16).